Here is a 173-residue protein sequence, read N- to C-terminus: Dual-action ribosomal maturation protein DarP (173 aa).

Belongs to the DarP family.

Its subcellular location is the cytoplasm. Functionally, member of a network of 50S ribosomal subunit biogenesis factors which assembles along the 30S-50S interface, preventing incorrect 23S rRNA structures from forming. Promotes peptidyl transferase center (PTC) maturation. The protein is Dual-action ribosomal maturation protein DarP of Pseudomonas putida (strain W619).